A 367-amino-acid polypeptide reads, in one-letter code: Outer membrane porin C (367 aa).

The signal sequence occupies residues 1–21 (MKVKVLSLLVPALLVAGAANA).

This sequence belongs to the Gram-negative porin family. In terms of assembly, homotrimer.

It localises to the cell outer membrane. In terms of biological role, forms pores that allow passive diffusion of small molecules across the outer membrane. The protein is Outer membrane porin C (ompC) of Escherichia coli O157:H7.